Consider the following 165-residue polypeptide: Probable chemoreceptor glutamine deamidase CheD (165 aa).

Belongs to the CheD family.

It catalyses the reaction L-glutaminyl-[protein] + H2O = L-glutamyl-[protein] + NH4(+). Probably deamidates glutamine residues to glutamate on methyl-accepting chemotaxis receptors (MCPs), playing an important role in chemotaxis. The chain is Probable chemoreceptor glutamine deamidase CheD from Symbiobacterium thermophilum (strain DSM 24528 / JCM 14929 / IAM 14863 / T).